Consider the following 150-residue polypeptide: Nucleoside diphosphate kinase (150 aa).

6 residues coordinate ATP: Lys10, Phe58, Arg86, Thr92, Arg103, and Asn113. The active-site Pros-phosphohistidine intermediate is the His116.

It belongs to the NDK family. In terms of assembly, homohexamer. Requires Mg(2+) as cofactor.

The catalysed reaction is a 2'-deoxyribonucleoside 5'-diphosphate + ATP = a 2'-deoxyribonucleoside 5'-triphosphate + ADP. The enzyme catalyses a ribonucleoside 5'-diphosphate + ATP = a ribonucleoside 5'-triphosphate + ADP. Its function is as follows. Major role in the synthesis of nucleoside triphosphates other than ATP. The ATP gamma phosphate is transferred to the NDP beta phosphate via a ping-pong mechanism, using a phosphorylated active-site intermediate. This is Nucleoside diphosphate kinase (awd) from Drosophila yakuba (Fruit fly).